The following is a 457-amino-acid chain: Glutamate--tRNA ligase 1 (457 aa).

The 'HIGH' region signature appears at 9–19 (PSPTGYIHIGN). The short motif at 250–254 (GLSKR) is the 'KMSKS' region element. K253 serves as a coordination point for ATP.

This sequence belongs to the class-I aminoacyl-tRNA synthetase family. Glutamate--tRNA ligase type 1 subfamily. Monomer.

The protein localises to the cytoplasm. The catalysed reaction is tRNA(Glu) + L-glutamate + ATP = L-glutamyl-tRNA(Glu) + AMP + diphosphate. Its function is as follows. Catalyzes the attachment of glutamate to tRNA(Glu) in a two-step reaction: glutamate is first activated by ATP to form Glu-AMP and then transferred to the acceptor end of tRNA(Glu). The polypeptide is Glutamate--tRNA ligase 1 (Brucella ovis (strain ATCC 25840 / 63/290 / NCTC 10512)).